Reading from the N-terminus, the 428-residue chain is 3-phosphoshikimate 1-carboxyvinyltransferase (428 aa).

Positions 23, 24, and 28 each coordinate 3-phosphoshikimate. Lys23 provides a ligand contact to phosphoenolpyruvate. Gly97 and Arg125 together coordinate phosphoenolpyruvate. Residues Ser170, Ser171, Gln172, Ser198, Asp314, Asn338, and Lys342 each coordinate 3-phosphoshikimate. Residue Gln172 participates in phosphoenolpyruvate binding. Residue Asp314 is the Proton acceptor of the active site. Phosphoenolpyruvate is bound by residues Arg346, Arg388, and Lys413.

It belongs to the EPSP synthase family. In terms of assembly, monomer.

The protein localises to the cytoplasm. The catalysed reaction is 3-phosphoshikimate + phosphoenolpyruvate = 5-O-(1-carboxyvinyl)-3-phosphoshikimate + phosphate. It participates in metabolic intermediate biosynthesis; chorismate biosynthesis; chorismate from D-erythrose 4-phosphate and phosphoenolpyruvate: step 6/7. Functionally, catalyzes the transfer of the enolpyruvyl moiety of phosphoenolpyruvate (PEP) to the 5-hydroxyl of shikimate-3-phosphate (S3P) to produce enolpyruvyl shikimate-3-phosphate and inorganic phosphate. In Baumannia cicadellinicola subsp. Homalodisca coagulata, this protein is 3-phosphoshikimate 1-carboxyvinyltransferase.